Reading from the N-terminus, the 287-residue chain is Membrane protein insertase YidC 2 (287 aa).

The N-terminal stretch at 1 to 26 is a signal peptide; the sequence is MKKKKRFKQKLLIASLVIGLMAVLSG. Cysteine 27 is lipidated: N-palmitoyl cysteine. Cysteine 27 carries S-diacylglycerol cysteine lipidation. Helical transmembrane passes span 65-85, 135-155, 178-198, 207-224, and 228-250; these read YAVGIIVVTILIRLLIMPLMI, MMGCLPLLIQMPILLGFYQAI, YILPVVAALTTFLSSKISMMG, AMIVYIMPVMILFMGITL, and LALYWIIGNIFTVFQTLLINNPF.

Belongs to the OXA1/ALB3/YidC family. Type 2 subfamily.

The protein localises to the cell membrane. Functionally, required for the insertion and/or proper folding and/or complex formation of integral membrane proteins into the membrane. Involved in integration of membrane proteins that insert both dependently and independently of the Sec translocase complex, as well as at least some lipoproteins. This Listeria monocytogenes serovar 1/2a (strain ATCC BAA-679 / EGD-e) protein is Membrane protein insertase YidC 2.